Reading from the N-terminus, the 263-residue chain is Tryptophan synthase alpha chain (263 aa).

Residues Glu-49 and Asp-60 each act as proton acceptor in the active site.

Belongs to the TrpA family. In terms of assembly, tetramer of two alpha and two beta chains.

The enzyme catalyses (1S,2R)-1-C-(indol-3-yl)glycerol 3-phosphate + L-serine = D-glyceraldehyde 3-phosphate + L-tryptophan + H2O. It participates in amino-acid biosynthesis; L-tryptophan biosynthesis; L-tryptophan from chorismate: step 5/5. Its function is as follows. The alpha subunit is responsible for the aldol cleavage of indoleglycerol phosphate to indole and glyceraldehyde 3-phosphate. This Cereibacter sphaeroides (strain KD131 / KCTC 12085) (Rhodobacter sphaeroides) protein is Tryptophan synthase alpha chain.